We begin with the raw amino-acid sequence, 182 residues long: MKNLFRTAALMVPLSLALAYGAQAKEIPIGKPQLLGGMEIAAVYLQPIEMEPEGMMRPAKDSDVHLEADIKAAKDNTNGFAEGDWVPYLVVSYELTHLDNGKVQKGDFMPMVANDGPHYGDNVKLDGPGKYKLKLFVSPPSANQHAHFGRHVDKETGVGPWFKPVTAEYEFVYAGTGKKGAY.

The N-terminal stretch at 1–24 is a signal peptide; that stretch reads MKNLFRTAALMVPLSLALAYGAQA.

This sequence belongs to the UPF0423 family.

This Brucella suis biovar 1 (strain 1330) protein is UPF0423 protein BRA0381/BS1330_II0378.